Here is a 732-residue protein sequence, read N- to C-terminus: Ubiquitin carboxyl-terminal hydrolase 21 (732 aa).

Residues 1–10 (MAEFSDPPPS) show a composition bias toward pro residues. Residues 1-111 (MAEFSDPPPS…ISPVSNNNHL (111 aa)) are disordered. 2 stretches are compositionally biased toward polar residues: residues 11 to 31 (NLSSSHKLTKPNQTLDESSPT) and 38 to 53 (VTNSLSLSSPIRQIQA). Residues 55 to 69 (SPAKPDGSSSSPPDK) are compositionally biased toward low complexity. A USP domain is found at 163 to 469 (AGLYNSGNTC…PAYILFYARE (307 aa)). Residue C172 is the Nucleophile of the active site. H428 functions as the Proton acceptor in the catalytic mechanism. The tract at residues 534-732 (KEEVFHSAES…SSNMRRSIKL (199 aa)) is disordered. The segment covering 540 to 551 (SAESSNNEDSSA) has biased composition (low complexity). The segment covering 583–609 (AYIDKSEKPFAETSQPKEPKPFADRAS) has biased composition (basic and acidic residues). The span at 719–732 (KKKKSSNMRRSIKL) shows a compositional bias: basic residues.

Belongs to the peptidase C19 family.

The catalysed reaction is Thiol-dependent hydrolysis of ester, thioester, amide, peptide and isopeptide bonds formed by the C-terminal Gly of ubiquitin (a 76-residue protein attached to proteins as an intracellular targeting signal).. In terms of biological role, recognizes and hydrolyzes the peptide bond at the C-terminal Gly of ubiquitin. Involved in the processing of poly-ubiquitin precursors as well as that of ubiquitinated proteins. The sequence is that of Ubiquitin carboxyl-terminal hydrolase 21 (UBP21) from Arabidopsis thaliana (Mouse-ear cress).